Reading from the N-terminus, the 266-residue chain is Manganese catalase (266 aa).

E35 is a Mn(2+) binding site. D57 and D61 together coordinate Ca(2+). Positions 66, 69, 148, and 181 each coordinate Mn(2+). The Ca(2+) site is built by N218, S220, and G222. The interval 243 to 266 (ENPEAMGGIPHIKPGDPRLHNHQG) is disordered. Basic and acidic residues predominate over residues 255-266 (KPGDPRLHNHQG).

This sequence belongs to the manganese catalase family. In terms of assembly, homohexamer. Requires Ca(2+) as cofactor. Mn(2+) is required as a cofactor.

The enzyme catalyses 2 H2O2 = O2 + 2 H2O. Functionally, catalyzes the decomposition of hydrogen peroxide into water and oxygen. The polypeptide is Manganese catalase (Lactiplantibacillus plantarum (Lactobacillus plantarum)).